Reading from the N-terminus, the 257-residue chain is Hydroxyethylthiazole kinase (257 aa).

Position 49 (Met-49) interacts with substrate. The ATP site is built by Arg-124 and Thr-170. Substrate is bound at residue Gly-197.

It belongs to the Thz kinase family. It depends on Mg(2+) as a cofactor.

The enzyme catalyses 5-(2-hydroxyethyl)-4-methylthiazole + ATP = 4-methyl-5-(2-phosphooxyethyl)-thiazole + ADP + H(+). It functions in the pathway cofactor biosynthesis; thiamine diphosphate biosynthesis; 4-methyl-5-(2-phosphoethyl)-thiazole from 5-(2-hydroxyethyl)-4-methylthiazole: step 1/1. Its function is as follows. Catalyzes the phosphorylation of the hydroxyl group of 4-methyl-5-beta-hydroxyethylthiazole (THZ). This chain is Hydroxyethylthiazole kinase, found in Klebsiella pneumoniae subsp. pneumoniae (strain ATCC 700721 / MGH 78578).